The primary structure comprises 86 residues: High affinity immunoglobulin epsilon receptor subunit gamma (86 aa).

Residues Met-1–Ala-18 form the signal peptide. Topologically, residues Leu-19–Gln-23 are extracellular. A helical membrane pass occupies residues Leu-24–Cys-44. Topologically, residues Arg-45–Gln-86 are cytoplasmic. Residues Ala-54 to Glu-82 enclose the ITAM domain. Tyr-65 is modified (phosphotyrosine). Phosphoserine is present on Ser-69. The residue at position 76 (Tyr-76) is a Phosphotyrosine. Phosphothreonine is present on Thr-78.

Belongs to the CD3Z/FCER1G family. As to quaternary structure, igE Fc receptor is a tetramer of an alpha chain, a beta chain, and two disulfide linked gamma chains. Associates with FCGR1A; forms a functional signaling complex. The signaling subunit of immunoglobulin gamma (IgG) Fc receptor complex. As a homodimer or a heterodimer of CD247 and FCER1G, associates with the ligand binding subunit FCGR3A to form a functional receptor complex. Associates with CLEC6A. Interacts with CLEC4E. Interacts (via ITAM domain) with SYK (via SH2 domains); activates SYK, enabling integrin-mediated activation of neutrophils and macrophages. Interacts with common beta chain of interleukin 3 receptor CSF2RB and recruits SYK in response to IL3 stimulation; this interaction is direct. Interacts with CD300LH; the interaction may be indirect. Interacts with CD300LD. Interacts with TARM1.

The protein localises to the cell membrane. Adapter protein containing an immunoreceptor tyrosine-based activation motif (ITAM) that transduces activation signals from various immunoreceptors. As a component of the high-affinity immunoglobulin E (IgE) receptor, mediates allergic inflammatory signaling in mast cells. As a constitutive component of interleukin-3 receptor complex, selectively mediates interleukin 4/IL4 production b basophils priming T-cells toward effector T-helper 2 subset. Associates with pattern recognition receptors CLEC4D and CLEC4E to form a functional signaling complex in myeloid cells. Binding of mycobacterial trehalose 6,6'-dimycolate (TDM) to this receptor complex leads to phosphorylation of ITAM, triggering activation of SYK, CARD9 and NF-kappa-B, consequently driving maturation of antigen-presenting cells and shaping antigen-specific priming of T-cells toward effector T-helper 1 and T-helper 17 cell subtypes. May function cooperatively with other activating receptors. Functionally linked to integrin beta-2/ITGB2-mediated neutrophil activation. Also involved in integrin alpha-2/ITGA2-mediated platelet activation. The sequence is that of High affinity immunoglobulin epsilon receptor subunit gamma (FCER1G) from Sus scrofa (Pig).